A 149-amino-acid chain; its full sequence is METQRASLCLGRWSLWLLLLALVVPSASAQALSYREAVLRAVDRLNEQSSEANLYRLLELDQPPKADEDPGTPKPVSFTVKETVCPRPTRQPPELCDFKENGRVKQCVGTVTLDQIKDPLDITCNEVQGVRGGRLCYCRRRFCVCVGRG.

An N-terminal signal peptide occupies residues 1 to 29; the sequence is METQRASLCLGRWSLWLLLLALVVPSASA. The propeptide occupies 30–130; it reads QALSYREAVL…DITCNEVQGV (101 aa). A disordered region spans residues 61–80; the sequence is DQPPKADEDPGTPKPVSFTV. 4 disulfide bridges follow: Cys85-Cys96, Cys107-Cys124, Cys136-Cys145, and Cys138-Cys143. The residue at position 148 (Arg148) is an Arginine amide.

It belongs to the cathelicidin family.

Its subcellular location is the secreted. Functionally, microbicidal activity. Active against E.coli, Listeria monocytogenes and C.albicans, in vitro. This is Protegrin-1 (NPG1) from Sus scrofa (Pig).